The chain runs to 311 residues: Ornithine carbamoyltransferase (311 aa).

Residues 57 to 60 (STRT), Gln84, Arg108, and 135 to 138 (HPCQ) each bind carbamoyl phosphate. L-ornithine is bound by residues Asn166, Asp230, and 234-235 (SM). Residues 270-271 (CL) and Arg298 contribute to the carbamoyl phosphate site.

The protein belongs to the aspartate/ornithine carbamoyltransferase superfamily. OTCase family.

It is found in the cytoplasm. It catalyses the reaction carbamoyl phosphate + L-ornithine = L-citrulline + phosphate + H(+). The protein operates within amino-acid biosynthesis; L-arginine biosynthesis; L-arginine from L-ornithine and carbamoyl phosphate: step 1/3. In terms of biological role, reversibly catalyzes the transfer of the carbamoyl group from carbamoyl phosphate (CP) to the N(epsilon) atom of ornithine (ORN) to produce L-citrulline. This chain is Ornithine carbamoyltransferase, found in Carboxydothermus hydrogenoformans (strain ATCC BAA-161 / DSM 6008 / Z-2901).